The sequence spans 286 residues: Acetyl-coenzyme A carboxylase carboxyl transferase subunit beta (286 aa).

The region spanning 23–286 (IWVKCNNCNQ…ITNKPEPKKE (264 aa)) is the CoA carboxyltransferase N-terminal domain. Positions 27, 30, 46, and 49 each coordinate Zn(2+). The C4-type zinc finger occupies 27 to 49 (CNNCNQMIYKIELEKNLEVCPKC).

This sequence belongs to the AccD/PCCB family. Acetyl-CoA carboxylase is a heterohexamer composed of biotin carboxyl carrier protein (AccB), biotin carboxylase (AccC) and two subunits each of ACCase subunit alpha (AccA) and ACCase subunit beta (AccD). It depends on Zn(2+) as a cofactor.

Its subcellular location is the cytoplasm. The catalysed reaction is N(6)-carboxybiotinyl-L-lysyl-[protein] + acetyl-CoA = N(6)-biotinyl-L-lysyl-[protein] + malonyl-CoA. Its pathway is lipid metabolism; malonyl-CoA biosynthesis; malonyl-CoA from acetyl-CoA: step 1/1. Functionally, component of the acetyl coenzyme A carboxylase (ACC) complex. Biotin carboxylase (BC) catalyzes the carboxylation of biotin on its carrier protein (BCCP) and then the CO(2) group is transferred by the transcarboxylase to acetyl-CoA to form malonyl-CoA. This chain is Acetyl-coenzyme A carboxylase carboxyl transferase subunit beta, found in Wigglesworthia glossinidia brevipalpis.